The following is a 1159-amino-acid chain: Protocadherin-17 (1159 aa).

An N-terminal signal peptide occupies residues 1-17; sequence MYLSICCCFLLWAPALT. Cadherin domains are found at residues 18–132, 133–243, 244–351, 353–472, 473–583, and 589–695; these read LKNL…APSF, SSDQ…SPVF, EAPS…APSI, FVSV…PPRF, TKGL…APVI, and QNDT…VPRV. Over 18-707 the chain is Extracellular; the sequence is LKNLNYSVPE…EQHHWDMSLP (690 aa). N-linked (GlcNAc...) asparagine glycosylation is present at Asn-22. A Cell attachment site motif is present at residues 186–188; sequence RGD. N-linked (GlcNAc...) asparagine glycans are attached at residues Asn-266, Asn-439, Asn-453, Asn-504, Asn-566, and Asn-590. A helical transmembrane segment spans residues 708–728; that stretch reads LIVTLSTISIILLAAMITIAV. Topologically, residues 729–1159 are cytoplasmic; the sequence is KCKRENKEIR…RGNDPVAVRK (431 aa). 2 disordered regions span residues 858–909 and 1108–1132; these read NFPA…KGSC and SRDSSEMGAVLEQLDHPNRDLGRES. Positions 867-879 are enriched in polar residues; sequence GSRQQFVQSSSTF. Composition is skewed to basic and acidic residues over residues 880 to 895 and 1120 to 1132; these read KDPERASLRDSGHGDS and QLDHPNRDLGRES.

The protein resides in the cell membrane. Its function is as follows. Potential calcium-dependent cell-adhesion protein. The sequence is that of Protocadherin-17 (PCDH17) from Homo sapiens (Human).